The chain runs to 115 residues: Large ribosomal subunit protein bL19 (115 aa).

This sequence belongs to the bacterial ribosomal protein bL19 family.

This protein is located at the 30S-50S ribosomal subunit interface and may play a role in the structure and function of the aminoacyl-tRNA binding site. The sequence is that of Large ribosomal subunit protein bL19 from Kosmotoga olearia (strain ATCC BAA-1733 / DSM 21960 / TBF 19.5.1).